The following is a 556-amino-acid chain: Urocanate hydratase (556 aa).

NAD(+) is bound by residues glycine 52–glycine 53, glutamine 130, glycine 176–glycine 178, glutamate 196, arginine 201, asparagine 242–alanine 243, glutamine 263–histidine 267, tyrosine 273–leucine 274, and tyrosine 322. Residue cysteine 410 is part of the active site. An NAD(+)-binding site is contributed by glycine 492.

It belongs to the urocanase family. NAD(+) serves as cofactor.

Its subcellular location is the cytoplasm. The enzyme catalyses 4-imidazolone-5-propanoate = trans-urocanate + H2O. It participates in amino-acid degradation; L-histidine degradation into L-glutamate; N-formimidoyl-L-glutamate from L-histidine: step 2/3. Catalyzes the conversion of urocanate to 4-imidazolone-5-propionate. This chain is Urocanate hydratase, found in Shewanella woodyi (strain ATCC 51908 / MS32).